Reading from the N-terminus, the 295-residue chain is Aquaporin-9 (295 aa).

Topologically, residues 1–24 (MQPEGAEKGKSFKQRLVLKSSLAK) are cytoplasmic. The helical transmembrane segment at 25–43 (ETLSEFLGTFILIVLGCGC) threads the bilayer. At 44-57 (VAQAILSRGRFGGV) the chain is on the extracellular side. Residues 58–77 (ITINVGFSMAVAMAIYVAGG) traverse the membrane as a helical segment. The Cytoplasmic segment spans residues 78–79 (VS). An intramembrane region (discontinuously helical) is located at residues 80–92 (GGHINPAVSLAMC). Positions 84–86 (NPA) match the NPA 1 motif. At 93 to 98 (LFGRMK) the chain is on the cytoplasmic side. A helical transmembrane segment spans residues 99–123 (WFKLPFYVGAQFLGAFVGAATVFGI). At 124-160 (YYDGLMSFAGGKLLIVGENATAHIFATYPAPYLSLAN) the chain is on the extracellular side. A helical membrane pass occupies residues 161–178 (AFADQVVATMILLIIVFA). Residues 179–190 (IFDSRNLGAPRG) lie on the Cytoplasmic side of the membrane. Residues 191-207 (LEPIAIGLLIIVIASSL) form a helical membrane-spanning segment. The Extracellular portion of the chain corresponds to 208–210 (GLN). Positions 211–225 (SGCAMNPARDLSPRL) form an intramembrane region, discontinuously helical. The NPA 2 signature appears at 216 to 218 (NPA). Topologically, residues 226-243 (FTALAGWGFEVFRAGNNF) are extracellular. Residues 244–264 (WWIPVVGPLVGAVIGGLIYVL) traverse the membrane as a helical segment. Residues 265–295 (VIEIHHPEPDSVFKTEQSEDKPEKYELSVIM) are Cytoplasmic-facing.

It belongs to the MIP/aquaporin (TC 1.A.8) family. Homotetramer; each monomer provides an independent glycerol/water pore. Highly expressed in peripheral leukocytes. Also expressed in liver, lung, and spleen.

It is found in the cell membrane. Its subcellular location is the basolateral cell membrane. It carries out the reaction glycerol(in) = glycerol(out). It catalyses the reaction H2O(in) = H2O(out). The catalysed reaction is urea(in) = urea(out). The enzyme catalyses (S)-lactate(in) = (S)-lactate(out). It carries out the reaction NH4(+)(in) = NH4(+)(out). It catalyses the reaction uracil(in) = uracil(out). The catalysed reaction is adenine(out) = adenine(in). The enzyme catalyses 3-hydroxybutanoate(in) = 3-hydroxybutanoate(out). It carries out the reaction D-sorbitol(in) = D-sorbitol(out). It catalyses the reaction D-mannitol(in) = D-mannitol(out). The catalysed reaction is H2O2(out) = H2O2(in). The enzyme catalyses arsenite(in) = arsenite(out). It carries out the reaction selenite(in) = selenite(out). Aquaglyceroporins form homotetrameric transmembrane channels, with each monomer independently mediating glycerol and water transport across the plasma membrane along their osmotic gradient. AQP9 is the primary route for glycerol uptake in hepatocytes, supporting hepatic gluconeogenesis. It exhibits broad specificity and may transport various small, non-charged solutes, including carbamides, polyols, purines, and pyrimidines. AQP9 may also facilitate hepatic urea extrusion. Due to its permeability to lactate, AQP9 might participate in the astrocyte-to-neuron lactate shuttle, supplying neurons with energy. Additionally, AQP9 is permeable to arsenite, contributing to arsenic excretion by the liver and providing partial protection against arsenic toxicity. It is also permeable to H2O2 in vivo. Could also be permeable to ammonium. In Homo sapiens (Human), this protein is Aquaporin-9.